A 110-amino-acid chain; its full sequence is uncharacterized protein (110 aa).

Residues 1 to 72 (MWRSSNQRGV…NHRNIHLRNP (72 aa)) form a disordered region. Residues 10–23 (VSRRRDKSMRKYTR) are compositionally biased toward basic residues. Positions 48–57 (KNTYTGNISS) are enriched in polar residues.

This is an uncharacterized protein from Human herpesvirus 6A (strain Uganda-1102) (HHV-6 variant A).